The chain runs to 331 residues: Induced myeloid leukemia cell differentiation protein Mcl-1 homolog (331 aa).

A PEST-like region spans residues 85 to 156 (LAVPPEEMAA…PPEEEEDDLY (72 aa)). Serine 102 carries the post-translational modification Phosphoserine. Residue lysine 117 forms a Glycyl lysine isopeptide (Lys-Gly) (interchain with G-Cter in ubiquitin) linkage. The segment at 130–154 (EAAKSSGADGSLPSTPPPPEEEEDD) is disordered. Serine 140 is subject to Phosphoserine; by GSK3-alpha and GSK3-beta. Serine 143 carries the phosphoserine modification. Threonine 144 is modified (phosphothreonine; by MAPK). Glycyl lysine isopeptide (Lys-Gly) (interchain with G-Cter in ubiquitin) cross-links involve residues lysine 175 and lysine 178. The BH3 motif lies at 190-204 (ALETLRRVGDGVQRN). The short motif at 234 to 253 (VFKDGVTNWGRIVTLISFGA) is the BH1 element. Residues 285-300 (DWLVKQRGWDGFVEFF) carry the BH2 motif. The helical transmembrane segment at 308–330 (GIRNVLLAFAGVAGVGAGLAYLI) threads the bilayer.

It belongs to the Bcl-2 family. As to quaternary structure, interacts with HIF3A isoform 2 (via C-terminus domain). Interacts with BAD, BOK, BIK, BAX, BAK1, and TPT1. Interacts with BBC3, BMF and PMAIP1. Interacts with BOP. Interacts with BCL2L11; this interaction may sequester BCL2L11 and prevent its pro-apoptotic activity. Interacts with GIMAP5 and HSPA8/HSC70; the interaction between HSPA8 and MCL1 is impaired in the absence of GIMAP5. Post-translationally, cleaved by CASP3 during apoptosis, yielding a pro-apoptotic C-terminal fragment. Rapidly degraded in the absence of phosphorylation in the PEST region. In terms of processing, phosphorylated on Ser-140, by GSK3, in response to IL3/interleukin-3 withdrawal. Phosphorylation at Ser-140 induces ubiquitination and proteasomal degradation, abrogating the anti-apoptotic activity. Treatment with taxol or okadaic acid induces phosphorylation on additional sites. Post-translationally, ubiquitinated. Ubiquitination is induced by phosphorylation at Ser-140. Deubiquitinated by USP20; leading to increased stability.

It localises to the membrane. It is found in the cytoplasm. The protein localises to the mitochondrion. The protein resides in the nucleus. Its subcellular location is the nucleoplasm. Its function is as follows. Involved in the regulation of apoptosis versus cell survival, and in the maintenance of viability but not of proliferation. Mediates its effects by interactions with a number of other regulators of apoptosis. Isoform 2 has antiapoptotic activity. In Mus musculus (Mouse), this protein is Induced myeloid leukemia cell differentiation protein Mcl-1 homolog (Mcl1).